The sequence spans 269 residues: Undecaprenyl-diphosphatase (269 aa).

Helical transmembrane passes span 3 to 23 (LLIK…LPIS), 41 to 61 (FATM…VFYY), 78 to 98 (GFNL…IGLL), 107 to 127 (LFSP…MIVI), 148 to 167 (SLLI…SRSA), 184 to 204 (AEFS…LSLL), 213 to 233 (LEWQ…LFVV), and 248 to 268 (FAYY…EKIV).

Belongs to the UppP family.

The protein localises to the cell membrane. The enzyme catalyses di-trans,octa-cis-undecaprenyl diphosphate + H2O = di-trans,octa-cis-undecaprenyl phosphate + phosphate + H(+). Functionally, catalyzes the dephosphorylation of undecaprenyl diphosphate (UPP). Confers resistance to bacitracin. The protein is Undecaprenyl-diphosphatase of Thermoanaerobacter sp. (strain X514).